The chain runs to 177 residues: NADH-quinone oxidoreductase subunit B (177 aa).

4 residues coordinate [4Fe-4S] cluster: cysteine 56, cysteine 57, cysteine 121, and cysteine 151.

It belongs to the complex I 20 kDa subunit family. In terms of assembly, NDH-1 is composed of 14 different subunits. Subunits NuoB, C, D, E, F, and G constitute the peripheral sector of the complex. It depends on [4Fe-4S] cluster as a cofactor.

It is found in the cell inner membrane. The enzyme catalyses a quinone + NADH + 5 H(+)(in) = a quinol + NAD(+) + 4 H(+)(out). NDH-1 shuttles electrons from NADH, via FMN and iron-sulfur (Fe-S) centers, to quinones in the respiratory chain. Couples the redox reaction to proton translocation (for every two electrons transferred, four hydrogen ions are translocated across the cytoplasmic membrane), and thus conserves the redox energy in a proton gradient. The polypeptide is NADH-quinone oxidoreductase subunit B (Sphingopyxis alaskensis (strain DSM 13593 / LMG 18877 / RB2256) (Sphingomonas alaskensis)).